A 336-amino-acid chain; its full sequence is Inositol 2-dehydrogenase (336 aa).

Belongs to the Gfo/Idh/MocA family. Homotetramer.

It carries out the reaction myo-inositol + NAD(+) = scyllo-inosose + NADH + H(+). Functionally, involved in the oxidation of myo-inositol (MI) to 2-keto-myo-inositol (2KMI or 2-inosose). The polypeptide is Inositol 2-dehydrogenase (Pseudomonas savastanoi pv. phaseolicola (strain 1448A / Race 6) (Pseudomonas syringae pv. phaseolicola (strain 1448A / Race 6))).